Here is an 819-residue protein sequence, read N- to C-terminus: Lon protease (819 aa).

Polar residues predominate over residues 1 to 14; that stretch reads MNSTNNTDSQNLDP. Positions 1–41 are disordered; that stretch reads MNSTNNTDSQNLDPNASEVEKLLDESAEAEEKTDDHTPPSE. Basic and acidic residues predominate over residues 18–38; it reads EVEKLLDESAEAEEKTDDHTP. Positions 42–239 constitute a Lon N-terminal domain; it reads LFILPLNKRP…KALVLLKKEL (198 aa). 392–399 is a binding site for ATP; that stretch reads GPPGVGKT. Residues 634 to 818 enclose the Lon proteolytic domain; it reads KTPVGVATGL…DDVFKIAFPG (185 aa). Residues S724 and K767 contribute to the active site.

Belongs to the peptidase S16 family. As to quaternary structure, homohexamer. Organized in a ring with a central cavity.

It is found in the cytoplasm. The enzyme catalyses Hydrolysis of proteins in presence of ATP.. Its function is as follows. ATP-dependent serine protease that mediates the selective degradation of mutant and abnormal proteins as well as certain short-lived regulatory proteins. Required for cellular homeostasis and for survival from DNA damage and developmental changes induced by stress. Degrades polypeptides processively to yield small peptide fragments that are 5 to 10 amino acids long. Binds to DNA in a double-stranded, site-specific manner. In Chlamydia muridarum (strain MoPn / Nigg), this protein is Lon protease.